We begin with the raw amino-acid sequence, 179 residues long: Replication restart protein DnaT (179 aa).

The disordered stretch occupies residues 156-179; that stretch reads GGLPKRDVNTVSEPDSQIPPGFRG.

Belongs to the DnaT family. In terms of assembly, homooligomerizes. Interacts with PriB. Component of the replication restart primosome. Primosome assembly occurs via a 'hand-off' mechanism. PriA binds to replication forks, subsequently PriB then DnaT bind; DnaT then displaces ssDNA to generate the helicase loading substrate.

Involved in the restart of stalled replication forks, which reloads the replicative helicase on sites other than the origin of replication. Can function in multiple replication restart pathways. Displaces ssDNA from a PriB-ssDNA complex. Probably forms a spiral filament on ssDNA. This is Replication restart protein DnaT from Escherichia coli (strain ATCC 8739 / DSM 1576 / NBRC 3972 / NCIMB 8545 / WDCM 00012 / Crooks).